Consider the following 414-residue polypeptide: 3-oxoacyl-[acyl-carrier-protein] synthase 2 (414 aa).

The Ketosynthase family 3 (KS3) domain occupies 3–411 (KRRVVITGLG…GTNGTLVLSR (409 aa)). Residues Cys164, His304, and His341 each act as for beta-ketoacyl synthase activity in the active site.

The protein belongs to the thiolase-like superfamily. Beta-ketoacyl-ACP synthases family. Homodimer.

It carries out the reaction a fatty acyl-[ACP] + malonyl-[ACP] + H(+) = a 3-oxoacyl-[ACP] + holo-[ACP] + CO2. It catalyses the reaction (9Z)-hexadecenoyl-[ACP] + malonyl-[ACP] + H(+) = 3-oxo-(11Z)-octadecenoyl-[ACP] + holo-[ACP] + CO2. Its pathway is lipid metabolism; fatty acid biosynthesis. Functionally, involved in the type II fatty acid elongation cycle. Catalyzes the elongation of a wide range of acyl-ACP by the addition of two carbons from malonyl-ACP to an acyl acceptor. Can efficiently catalyze the conversion of palmitoleoyl-ACP (cis-hexadec-9-enoyl-ACP) to cis-vaccenoyl-ACP (cis-octadec-11-enoyl-ACP), an essential step in the thermal regulation of fatty acid composition. This chain is 3-oxoacyl-[acyl-carrier-protein] synthase 2 (fabF), found in Coxiella burnetii (strain RSA 493 / Nine Mile phase I).